A 158-amino-acid chain; its full sequence is Cyclic pyranopterin monophosphate synthase (158 aa).

Residues 75-77 (LCH) and 113-114 (ME) each bind substrate. Asp-128 is an active-site residue.

The protein belongs to the MoaC family. In terms of assembly, homohexamer; trimer of dimers.

It catalyses the reaction (8S)-3',8-cyclo-7,8-dihydroguanosine 5'-triphosphate = cyclic pyranopterin phosphate + diphosphate. It participates in cofactor biosynthesis; molybdopterin biosynthesis. Functionally, catalyzes the conversion of (8S)-3',8-cyclo-7,8-dihydroguanosine 5'-triphosphate to cyclic pyranopterin monophosphate (cPMP). In Roseiflexus sp. (strain RS-1), this protein is Cyclic pyranopterin monophosphate synthase.